The sequence spans 68 residues: Large ribosomal subunit protein bL31 (68 aa).

4 residues coordinate Zn(2+): cysteine 17, cysteine 19, cysteine 37, and cysteine 40.

It belongs to the bacterial ribosomal protein bL31 family. Type A subfamily. As to quaternary structure, part of the 50S ribosomal subunit. Zn(2+) is required as a cofactor.

Its function is as follows. Binds the 23S rRNA. The sequence is that of Large ribosomal subunit protein bL31 from Dehalococcoides mccartyi (strain CBDB1).